We begin with the raw amino-acid sequence, 198 residues long: Protein ORFi in retron Ec67 (198 aa).

Belongs to the CI repressor protein family.

In Escherichia coli, this protein is Protein ORFi in retron Ec67.